Reading from the N-terminus, the 37-residue chain is Large ribosomal subunit protein bL36 (37 aa).

This sequence belongs to the bacterial ribosomal protein bL36 family.

The chain is Large ribosomal subunit protein bL36 from Clostridium kluyveri (strain NBRC 12016).